The primary structure comprises 160 residues: Transcriptional repressor NrdR (160 aa).

A zinc finger lies at 3–34 (CPFCRHADTQVVDSRVSEDGATIRRRRRCPAC). The 91-residue stretch at 49–139 (PSVVKKDGSR…VYRRFEDVSE (91 aa)) folds into the ATP-cone domain.

It belongs to the NrdR family. It depends on Zn(2+) as a cofactor.

Negatively regulates transcription of bacterial ribonucleotide reductase nrd genes and operons by binding to NrdR-boxes. This is Transcriptional repressor NrdR from Paraburkholderia phytofirmans (strain DSM 17436 / LMG 22146 / PsJN) (Burkholderia phytofirmans).